Here is a 437-residue protein sequence, read N- to C-terminus: UDP-N-acetylmuramate--L-alanine ligase (437 aa).

ATP is bound at residue 108–114; sequence GAHGKTS.

It belongs to the MurCDEF family.

The protein resides in the cytoplasm. It catalyses the reaction UDP-N-acetyl-alpha-D-muramate + L-alanine + ATP = UDP-N-acetyl-alpha-D-muramoyl-L-alanine + ADP + phosphate + H(+). It functions in the pathway cell wall biogenesis; peptidoglycan biosynthesis. In terms of biological role, cell wall formation. This Staphylococcus aureus protein is UDP-N-acetylmuramate--L-alanine ligase.